The primary structure comprises 418 residues: 3-phosphoshikimate 1-carboxyvinyltransferase (418 aa).

3 residues coordinate 3-phosphoshikimate: Lys26, Ser27, and Arg31. Lys26 lines the phosphoenolpyruvate pocket. Gly97 and Arg125 together coordinate phosphoenolpyruvate. Ser170, Ser171, Gln172, Asp297, Asn320, and Lys324 together coordinate 3-phosphoshikimate. A phosphoenolpyruvate-binding site is contributed by Gln172. The active-site Proton acceptor is the Asp297. Arg328, Arg375, and Lys400 together coordinate phosphoenolpyruvate.

Belongs to the EPSP synthase family. As to quaternary structure, monomer.

It is found in the cytoplasm. It catalyses the reaction 3-phosphoshikimate + phosphoenolpyruvate = 5-O-(1-carboxyvinyl)-3-phosphoshikimate + phosphate. It participates in metabolic intermediate biosynthesis; chorismate biosynthesis; chorismate from D-erythrose 4-phosphate and phosphoenolpyruvate: step 6/7. Functionally, catalyzes the transfer of the enolpyruvyl moiety of phosphoenolpyruvate (PEP) to the 5-hydroxyl of shikimate-3-phosphate (S3P) to produce enolpyruvyl shikimate-3-phosphate and inorganic phosphate. The sequence is that of 3-phosphoshikimate 1-carboxyvinyltransferase from Pseudomonas syringae pv. syringae (strain B728a).